Reading from the N-terminus, the 528-residue chain is GMP synthase [glutamine-hydrolyzing] (528 aa).

In terms of domain architecture, Glutamine amidotransferase type-1 spans 13–203 (TVLVVDFGAQ…LYEAAGCRPT (191 aa)). C90 acts as the Nucleophile in catalysis. Active-site residues include H177 and E179. Residues 204-402 (WTMVNIVEDQ…LGLPAEMVWR (199 aa)) form the GMPS ATP-PPase domain. 231 to 237 (SGGVDSA) is a binding site for ATP.

As to quaternary structure, homodimer.

It carries out the reaction XMP + L-glutamine + ATP + H2O = GMP + L-glutamate + AMP + diphosphate + 2 H(+). It participates in purine metabolism; GMP biosynthesis; GMP from XMP (L-Gln route): step 1/1. In terms of biological role, catalyzes the synthesis of GMP from XMP. This Thermobifida fusca (strain YX) protein is GMP synthase [glutamine-hydrolyzing].